The primary structure comprises 157 residues: Small ribosomal subunit protein uS7 (157 aa).

It belongs to the universal ribosomal protein uS7 family. Part of the 30S ribosomal subunit. Contacts proteins S9 and S11.

One of the primary rRNA binding proteins, it binds directly to 16S rRNA where it nucleates assembly of the head domain of the 30S subunit. Is located at the subunit interface close to the decoding center, probably blocks exit of the E-site tRNA. This Caulobacter vibrioides (strain ATCC 19089 / CIP 103742 / CB 15) (Caulobacter crescentus) protein is Small ribosomal subunit protein uS7.